The chain runs to 572 residues: Transducin-like enhancer protein 6 (572 aa).

Disordered regions lie at residues 1 to 30 (MTSR…SSPT), 92 to 121 (QSEE…SSFE), and 174 to 236 (KAKP…VQEP). Polar residues predominate over residues 14–30 (KSTSPCPGISNSESSPT). WD repeat units lie at residues 284–322 (AHGE…AEDR), 332–372 (TPGA…LHVK), 377–416 (CAGL…VVRD), 419–456 (GYPD…KPLE), 458–497 (QFKS…RHMV), 499–538 (QKDS…KVFE), and 540–571 (PEMS…YQIT). Serine 510 bears the Phosphoserine; by PKA mark.

The protein belongs to the WD repeat Groucho/TLE family. As to quaternary structure, homodimers. Component of the subcortical maternal complex (SCMC), at least composed of NLRP5, KHDC3, OOEP, and TLE6. Within the complex, interacts with NLRP5, KHDC3 and OOEP. The SCMC may facilitate translocation of its components between the nuclear and cytoplasmic compartments. As part of the SCMC interacts with the SCMC-associated protein ZBED3. As part of the SCMC interacts with the SCMC-associated protein NLRP4F. As part of the SCMC interacts with the SCMC-associated protein CFL1/Cofilin-1. Interacts with FOXG1/BF-1; the interaction inhibits TLE1 interaction with FOXG1/BF-1. Interacts with NFATC1. Interacts with PAX6. Component of the subcortical maternal complex (SCMC), at least composed of NLRP5, KHDC3L, OOEP, and TLE6 isoform 1. Within the complex, interacts with NLRP5, KHDC3L and OOEP. The SCMC may facilitate translocation of its components between the nuclear and cytoplasmic compartments.

The protein resides in the cytoplasm. The protein localises to the nucleus. Its function is as follows. Component of the subcortical maternal complex (SCMC), a multiprotein complex that plays a key role in early embryonic development. The SCMC complex is a structural constituent of cytoplasmic lattices, which consist in fibrous structures found in the cytoplasm of oocytes and preimplantation embryos. They are required to store maternal proteins critical for embryonic development, such as proteins that control epigenetic reprogramming of the preimplantation embryo, and prevent their degradation or activation. Also required for spermatogenesis: regulates spermatogonia proliferation and cell cycle progression, potentially via regulation of cell cycle regulatory genes such as; CEBPB, CEBPA, CSF3, PCNA, and CDK4. Suppresses FOXG1/BF-1-mediated transcriptional repression by inhibiting interaction of the transcriptional corepressor TLE1 with FOXG1 which promotes cortical neuron differentiation. Acts as a transcriptional corepressor of NFATC1-mediated gene expression by contributing to PAX6-mediated repression. Functionally, component of the subcortical maternal complex (SCMC), a multiprotein complex that plays a key role in early embryonic development. The chain is Transducin-like enhancer protein 6 from Homo sapiens (Human).